A 582-amino-acid polypeptide reads, in one-letter code: DNA mismatch repair protein MutL (582 aa).

The protein belongs to the DNA mismatch repair MutL/HexB family.

Its function is as follows. This protein is involved in the repair of mismatches in DNA. It is required for dam-dependent methyl-directed DNA mismatch repair. May act as a 'molecular matchmaker', a protein that promotes the formation of a stable complex between two or more DNA-binding proteins in an ATP-dependent manner without itself being part of a final effector complex. This chain is DNA mismatch repair protein MutL, found in Acidiphilium cryptum (strain JF-5).